The following is a 207-amino-acid chain: Basic helix-loop-helix transcription factor scleraxis (207 aa).

Disordered regions lie at residues 1–91 (MSFA…RDRT) and 151–183 (AFFHSGRAGSPLPPPPPPPPLARDGGENTQPKQ). Basic and acidic residues predominate over residues 73 to 91 (PGREPRQRHTANARERDRT). Positions 78–130 (RQRHTANARERDRTNSVNTAFTALRTLIPTEPADRKLSKIETLRLASSYISHL) constitute a bHLH domain. Positions 161–171 (PLPPPPPPPPL) are enriched in pro residues.

Efficient DNA binding requires dimerization with another bHLH protein. Dimerizes and binds the E-box consensus sequence with E12. In terms of tissue distribution, expressed in mesenchymal precursors of cartilage and in connective tissue. Highly expressed in tendons in the limb, tongue and diaphragm and in cartilage of the bronchi.

Its subcellular location is the nucleus. Functionally, plays an early essential role in mesoderm formation, as well as a later role in formation of somite-derived chondrogenic lineages. The polypeptide is Basic helix-loop-helix transcription factor scleraxis (Scx) (Mus musculus (Mouse)).